A 172-amino-acid chain; its full sequence is Molybdopterin synthase catalytic subunit (172 aa).

The residue at position 20 (S20) is a Phosphoserine. Residues 127 to 128 (HR), K143, and 150 to 152 (KKE) contribute to the substrate site.

This sequence belongs to the MoaE family. MOCS2B subfamily. As to quaternary structure, heterotetramer; composed of 2 small (MOCS2A) and 2 large (MOCS2B) subunits.

It localises to the cytoplasm. Its subcellular location is the cytosol. The enzyme catalyses 2 [molybdopterin-synthase sulfur-carrier protein]-C-terminal-Gly-aminoethanethioate + cyclic pyranopterin phosphate + H2O = molybdopterin + 2 [molybdopterin-synthase sulfur-carrier protein]-C-terminal Gly-Gly + 2 H(+). The protein operates within cofactor biosynthesis; molybdopterin biosynthesis. Catalytic subunit of the molybdopterin synthase complex, a complex that catalyzes the conversion of precursor Z into molybdopterin. Acts by mediating the incorporation of 2 sulfur atoms from thiocarboxylated MOCS2A into precursor Z to generate a dithiolene group. The chain is Molybdopterin synthase catalytic subunit from Pongo abelii (Sumatran orangutan).